The sequence spans 354 residues: DNA polymerase IV (354 aa).

Positions 6 to 187 constitute a UmuC domain; sequence IIHVDCDCFY…LPVARLHGVG (182 aa). Mg(2+) is bound by residues Asp-10 and Asp-105. Residue Glu-106 is part of the active site.

The protein belongs to the DNA polymerase type-Y family. In terms of assembly, monomer. Requires Mg(2+) as cofactor.

It localises to the cytoplasm. It carries out the reaction DNA(n) + a 2'-deoxyribonucleoside 5'-triphosphate = DNA(n+1) + diphosphate. In terms of biological role, poorly processive, error-prone DNA polymerase involved in untargeted mutagenesis. Copies undamaged DNA at stalled replication forks, which arise in vivo from mismatched or misaligned primer ends. These misaligned primers can be extended by PolIV. Exhibits no 3'-5' exonuclease (proofreading) activity. May be involved in translesional synthesis, in conjunction with the beta clamp from PolIII. This is DNA polymerase IV from Pseudomonas putida (strain GB-1).